Consider the following 419-residue polypeptide: MDLETKMKKMGLGHEQGFGAPCLKCKENCEGFELHFWRKICRNCKCGQEEHDVLLSTEEDRKVGRLFEDTKYTTLIAKLKSDGIPMYKRNVMILTNPVAAKKNVSINTVTYEWAPPVQNQALARQYMQMLPKEKQPVAGSEGAQYRKKQLAKQLPAHDQDPSKCHELSPKEVKEMEQFVKKYKSEALGVGDVKLPSEMNAQGDKVHNPAGDRNTPAAVGSKDKSAEAKKTQYSCYCCKNTMREGDPAIYAERAGYDKLWHPACFICSTCGELLVDMIYFWKNGKLYCGRHYCDSEKPRCAGCDELIFSNEYTQAENQNWHLKHFCCFDCDNILAGKIYVMVRDKPVCKPCYVKNHAVVCQGCHNAIDPEVQRVTYNNFSWHASTECFLCSCCSKCLIGQKFMPVEGMVFCSVECKKMMS.

Positions 92 to 199 constitute a PET domain; sequence MILTNPVAAK…GDVKLPSEMN (108 aa). Disordered regions lie at residues 133 to 164 and 199 to 222; these read EKQP…PSKC and NAQG…GSKD. Residues 155-164 are compositionally biased toward basic and acidic residues; it reads PAHDQDPSKC. 3 LIM zinc-binding domains span residues 232–295, 297–357, and 360–419; these read YSCY…CDSE, PRCA…NHAV, and QGCH…KMMS.

The protein belongs to the prickle / espinas / testin family. As to quaternary structure, interacts via LIM domain 1 with ZYX. Interacts (via LIM domain 3) with ENAH and VASP. Interacts with ALKBH4, talin, actin, alpha-actinin, GRIP1 and PXN. Interacts (via LIM domain 2) with ACTL7A (via N-terminus). Heterodimer with ACTL7A; the heterodimer interacts with ENAH to form a heterotrimer.

It is found in the cytoplasm. The protein localises to the cell junction. The protein resides in the focal adhesion. In terms of biological role, scaffold protein that may play a role in cell adhesion, cell spreading and in the reorganization of the actin cytoskeleton. Plays a role in the regulation of cell proliferation. May act as a tumor suppressor. This chain is Testin (Tes), found in Rattus norvegicus (Rat).